Consider the following 129-residue polypeptide: Small ribosomal subunit protein uS11 (129 aa).

It belongs to the universal ribosomal protein uS11 family. Part of the 30S ribosomal subunit. Interacts with proteins S7 and S18. Binds to IF-3.

Located on the platform of the 30S subunit, it bridges several disparate RNA helices of the 16S rRNA. Forms part of the Shine-Dalgarno cleft in the 70S ribosome. This is Small ribosomal subunit protein uS11 from Serratia proteamaculans (strain 568).